Consider the following 181-residue polypeptide: Probable RNA 2'-phosphotransferase (181 aa).

The protein belongs to the KptA/TPT1 family.

In terms of biological role, removes the 2'-phosphate from RNA via an intermediate in which the phosphate is ADP-ribosylated by NAD followed by a presumed transesterification to release the RNA and generate ADP-ribose 1''-2''-cyclic phosphate (APPR&gt;P). May function as an ADP-ribosylase. This chain is Probable RNA 2'-phosphotransferase, found in Acaryochloris marina (strain MBIC 11017).